The chain runs to 75 residues: Stewaprin-a (75 aa).

An N-terminal signal peptide occupies residues 1 to 24 (MSSGGLLLLLGLLTLWAELIPVSG). A WAP domain is found at 27-72 (HPKKPGLCPPRPQKPPCVRECKNDWSCPGEQKCCRYGCIFECRDPI). Cystine bridges form between C34–C60, C43–C64, C47–C59, and C53–C68.

It belongs to the venom waprin family. Expressed by the venom gland.

The protein localises to the secreted. In terms of biological role, damages membranes of susceptible bacteria. Has no hemolytic activity. Not toxic to mice. Does not inhibit the proteinases elastase and cathepsin G. The chain is Stewaprin-a from Hoplocephalus stephensii (Stephens's banded snake).